Here is a 437-residue protein sequence, read N- to C-terminus: Proline--tRNA ligase (437 aa).

Belongs to the class-II aminoacyl-tRNA synthetase family. ProS type 2 subfamily. In terms of assembly, homodimer.

The protein resides in the cytoplasm. The catalysed reaction is tRNA(Pro) + L-proline + ATP = L-prolyl-tRNA(Pro) + AMP + diphosphate. Its function is as follows. Catalyzes the attachment of proline to tRNA(Pro) in a two-step reaction: proline is first activated by ATP to form Pro-AMP and then transferred to the acceptor end of tRNA(Pro). This is Proline--tRNA ligase from Acidiphilium cryptum (strain JF-5).